Here is a 139-residue protein sequence, read N- to C-terminus: Phosphoribosyl-AMP cyclohydrolase (139 aa).

Asp-95 is a Mg(2+) binding site. Cys-96 contacts Zn(2+). Positions 97 and 99 each coordinate Mg(2+). The Zn(2+) site is built by Cys-114 and Cys-121.

This sequence belongs to the PRA-CH family. As to quaternary structure, homodimer. Mg(2+) serves as cofactor. Requires Zn(2+) as cofactor.

The protein localises to the cytoplasm. The enzyme catalyses 1-(5-phospho-beta-D-ribosyl)-5'-AMP + H2O = 1-(5-phospho-beta-D-ribosyl)-5-[(5-phospho-beta-D-ribosylamino)methylideneamino]imidazole-4-carboxamide. The protein operates within amino-acid biosynthesis; L-histidine biosynthesis; L-histidine from 5-phospho-alpha-D-ribose 1-diphosphate: step 3/9. Its function is as follows. Catalyzes the hydrolysis of the adenine ring of phosphoribosyl-AMP. The chain is Phosphoribosyl-AMP cyclohydrolase from Chelativorans sp. (strain BNC1).